Consider the following 280-residue polypeptide: Pantothenate synthetase (280 aa).

30–37 (MGYLHEGH) contributes to the ATP binding site. Residue histidine 37 is the Proton donor of the active site. Glutamine 61 is a (R)-pantoate binding site. Glutamine 61 provides a ligand contact to beta-alanine. 147 to 150 (GQKD) contributes to the ATP binding site. Glutamine 153 lines the (R)-pantoate pocket. Residues valine 176 and 184–187 (MSSR) contribute to the ATP site.

The protein belongs to the pantothenate synthetase family. As to quaternary structure, homodimer.

The protein localises to the cytoplasm. The catalysed reaction is (R)-pantoate + beta-alanine + ATP = (R)-pantothenate + AMP + diphosphate + H(+). Its pathway is cofactor biosynthesis; (R)-pantothenate biosynthesis; (R)-pantothenate from (R)-pantoate and beta-alanine: step 1/1. Its function is as follows. Catalyzes the condensation of pantoate with beta-alanine in an ATP-dependent reaction via a pantoyl-adenylate intermediate. In Thermotoga neapolitana, this protein is Pantothenate synthetase.